A 148-amino-acid chain; its full sequence is Glutamyl-tRNA(Gln) amidotransferase subunit C, mitochondrial (148 aa).

This sequence belongs to the GatC family. In terms of assembly, subunit of the heterotrimeric GatCAB amidotransferase (AdT) complex, composed of A, B and C subunits.

The protein localises to the mitochondrion. It carries out the reaction L-glutamyl-tRNA(Gln) + L-glutamine + ATP + H2O = L-glutaminyl-tRNA(Gln) + L-glutamate + ADP + phosphate + H(+). In terms of biological role, allows the formation of correctly charged Gln-tRNA(Gln) through the transamidation of misacylated Glu-tRNA(Gln) in the mitochondria. The reaction takes place in the presence of glutamine and ATP through an activated gamma-phospho-Glu-tRNA(Gln). This Drosophila pseudoobscura pseudoobscura (Fruit fly) protein is Glutamyl-tRNA(Gln) amidotransferase subunit C, mitochondrial.